A 395-amino-acid chain; its full sequence is Mevalonate kinase (395 aa).

Residues K13, N55, N104, S135, and 140–146 (GAGLGSS) contribute to the ATP site. The active-site Proton donor is the S146. Mg(2+) contacts are provided by S146 and E193. The Proton acceptor role is filled by D204.

It belongs to the GHMP kinase family. Mevalonate kinase subfamily. In terms of assembly, homodimer. The cofactor is Mg(2+).

The protein resides in the cytoplasm. Its subcellular location is the peroxisome. The enzyme catalyses (R)-mevalonate + ATP = (R)-5-phosphomevalonate + ADP + H(+). It participates in isoprenoid biosynthesis; isopentenyl diphosphate biosynthesis via mevalonate pathway; isopentenyl diphosphate from (R)-mevalonate: step 1/3. With respect to regulation, farnesyl pyrophosphate and geranyl pyrophosphate inhibit mevalonate kinase activity by binding competitively at the ATP-binding sites. Catalyzes the phosphorylation of mevalonate to mevalonate 5-phosphate, a key step in isoprenoid and cholesterol biosynthesis. The chain is Mevalonate kinase from Mus musculus (Mouse).